Here is a 531-residue protein sequence, read N- to C-terminus: SWI/SNF-related matrix-associated actin-dependent regulator of chromatin subfamily D member 2 (531 aa).

Residues 20 to 85 form a disordered region; it reads AVAAALGAPP…MSPGSRMPMA (66 aa). Residues 34-45 show a composition bias toward low complexity; the sequence is PGMLPNPALRGP. Residues arginine 81 and arginine 104 each carry the asymmetric dimethylarginine modification. Positions 202–226 are disordered; the sequence is FSPSKADGDNSGTAGTPGGTPAADK. Serine 203 is subject to Phosphoserine. Threonine 217 carries the post-translational modification Phosphothreonine. Lysine 226 participates in a covalent cross-link: Glycyl lysine isopeptide (Lys-Gly) (interchain with G-Cter in SUMO2). The SWIB/MDM2 domain maps to 306-383; it reads HQPPQYKLDP…PMKLAGLLQH (78 aa).

The protein belongs to the SMARCD family. As to quaternary structure, component of the multiprotein chromatin-remodeling complexes SWI/SNF: SWI/SNF-A (BAF), SWI/SNF-B (PBAF) and related complexes. The canonical complex contains a catalytic subunit (either SMARCA4/BRG1/BAF190A or SMARCA2/BRM/BAF190B), and at least SMARCE1, ACTL6A/BAF53, SMARCC1/BAF155, SMARCC2/BAF170, and SMARCB1/SNF5/BAF47. Other subunits specific to each of the complexes may also be present permitting several possible combinations developmentally and tissue specific. Component of the BAF complex, which includes at least actin (ACTB), ARID1A/BAF250A, ARID1B/BAF250B, SMARCA2/BRM, SMARCA4/BRG1, ACTL6A/BAF53, ACTL6B/BAF53B, SMARCE1/BAF57, SMARCC1/BAF155, SMARCC2/BAF170, SMARCB1/SNF5/INI1, and one or more SMARCD1/BAF60A, SMARCD2/BAF60B, or SMARCD3/BAF60C. In muscle cells, the BAF complex also contains DPF3. Component of the SWI/SNF-B (PBAF) chromatin remodeling complex, at least composed of SMARCA4/BRG1, SMARCB1/BAF47/SNF5, ACTL6A/BAF53A or ACTL6B/BAF53B, SMARCE1/BAF57, SMARCD1/BAF60A, SMARCD2/BAF60B, perhaps SMARCD3/BAF60C, SMARCC1/BAF155, SMARCC2/BAF170, PBRM1/BAF180, ARID2/BAF200 and actin (ACTB). Interacts with UNKL. Interacts with CEBPE. Ubiquitinated through a signaling process involving RAC1 and the RING finger protein UNKL.

It localises to the nucleus. Involved in transcriptional activation and repression of select genes by chromatin remodeling (alteration of DNA-nucleosome topology). Component of SWI/SNF chromatin remodeling complexes that carry out key enzymatic activities, changing chromatin structure by altering DNA-histone contacts within a nucleosome in an ATP-dependent manner. Critical regulator of myeloid differentiation, controlling granulocytopoiesis and the expression of genes involved in neutrophil granule formation. The protein is SWI/SNF-related matrix-associated actin-dependent regulator of chromatin subfamily D member 2 (Smarcd2) of Rattus norvegicus (Rat).